The following is a 217-amino-acid chain: Killer cell lectin-like receptor subfamily B member 1F (217 aa).

The Cytoplasmic segment spans residues 1-45; that stretch reads MDTSRVYGNVKTFRSPGHKQASFPSLSTDACRCPHWHHLALKLGC. Residues 31–34 carry the LCK-binding motif motif; it reads CRCP. The helical; Signal-anchor for type II membrane protein transmembrane segment at 46–66 threads the bilayer; that stretch reads ATLILLLLTLIGLSVFVRFLV. The Extracellular segment spans residues 67–217; the sequence is QKPLIEKCSM…WICQKTLKHV (151 aa). The C-type lectin domain occupies 101–211; that stretch reads HRNKCLIISQ…CSSDNHWICQ (111 aa). 2 disulfides stabilise this stretch: Cys122-Cys210 and Cys189-Cys202.

Expressed in natural killer cells and a subset of T-cells.

The protein localises to the membrane. Its function is as follows. Binds CLEC2I/Clr-g leading to activation of natural killer cells or stimulation of IL-2 production and proliferation of T-cells in response to antigen stimulation. May contribute to the formation of the immunological synapse between T-cells and antigen-presenting dendritic cells. In Rattus norvegicus (Rat), this protein is Killer cell lectin-like receptor subfamily B member 1F.